A 227-amino-acid chain; its full sequence is Cytochrome c oxidase subunit 2 (227 aa).

Topologically, residues 1–14 are mitochondrial intermembrane; it reads MAYPMQLGFQDATS. The helical transmembrane segment at 15–45 threads the bilayer; that stretch reads PIMEELLHFHDHTLMIVFLISSLVLYVISLM. The Mitochondrial matrix portion of the chain corresponds to 46–59; that stretch reads LTTKLTHTSTMDAQ. The chain crosses the membrane as a helical span at residues 60 to 87; the sequence is EVETIWTILPAIILILIALPSLRILYMM. At 88-227 the chain is on the mitochondrial intermembrane side; it reads DEINNPSLTV…YFEKWSASML (140 aa). Positions 161, 196, 198, 200, 204, and 207 each coordinate Cu cation. Position 198 (E198) interacts with Mg(2+). The residue at position 218 (Y218) is a Phosphotyrosine.

This sequence belongs to the cytochrome c oxidase subunit 2 family. In terms of assembly, component of the cytochrome c oxidase (complex IV, CIV), a multisubunit enzyme composed of 14 subunits. The complex is composed of a catalytic core of 3 subunits MT-CO1, MT-CO2 and MT-CO3, encoded in the mitochondrial DNA, and 11 supernumerary subunits COX4I, COX5A, COX5B, COX6A, COX6B, COX6C, COX7A, COX7B, COX7C, COX8 and NDUFA4, which are encoded in the nuclear genome. The complex exists as a monomer or a dimer and forms supercomplexes (SCs) in the inner mitochondrial membrane with NADH-ubiquinone oxidoreductase (complex I, CI) and ubiquinol-cytochrome c oxidoreductase (cytochrome b-c1 complex, complex III, CIII), resulting in different assemblies (supercomplex SCI(1)III(2)IV(1) and megacomplex MCI(2)III(2)IV(2)). Found in a complex with TMEM177, COA6, COX18, COX20, SCO1 and SCO2. Interacts with TMEM177 in a COX20-dependent manner. Interacts with COX20. Interacts with COX16. Cu cation serves as cofactor.

The protein localises to the mitochondrion inner membrane. It carries out the reaction 4 Fe(II)-[cytochrome c] + O2 + 8 H(+)(in) = 4 Fe(III)-[cytochrome c] + 2 H2O + 4 H(+)(out). Its function is as follows. Component of the cytochrome c oxidase, the last enzyme in the mitochondrial electron transport chain which drives oxidative phosphorylation. The respiratory chain contains 3 multisubunit complexes succinate dehydrogenase (complex II, CII), ubiquinol-cytochrome c oxidoreductase (cytochrome b-c1 complex, complex III, CIII) and cytochrome c oxidase (complex IV, CIV), that cooperate to transfer electrons derived from NADH and succinate to molecular oxygen, creating an electrochemical gradient over the inner membrane that drives transmembrane transport and the ATP synthase. Cytochrome c oxidase is the component of the respiratory chain that catalyzes the reduction of oxygen to water. Electrons originating from reduced cytochrome c in the intermembrane space (IMS) are transferred via the dinuclear copper A center (CU(A)) of subunit 2 and heme A of subunit 1 to the active site in subunit 1, a binuclear center (BNC) formed by heme A3 and copper B (CU(B)). The BNC reduces molecular oxygen to 2 water molecules using 4 electrons from cytochrome c in the IMS and 4 protons from the mitochondrial matrix. This chain is Cytochrome c oxidase subunit 2 (MT-CO2), found in Rusa unicolor (Sambar).